The following is a 476-amino-acid chain: MTSLLALSPLILVCATAIVVMLTIAWRRHHELTATLTVVGLNLALAAQVVAWWQAPVSVTPLMTVDGLAVFGGVLILIATLACATLGHAYLEGAQGPREEYYLLLLCAAAGGLALVSSRHLAALFFGLELLSMPLYGMLAYTYRERGALEAGIKYMVLSAAASAFLLFGMALLYSRTGHLDFAGLGEALATAGGDGWLMAGMGMMLIGLGFKLSIVPFHLWTPDVYEGSPAPAATFLASASKVAVLLVLLRLLQSSPVQDAWLHSLLAVLAFVTMLVGNLLALTQNDLKRLLGYSSIAHFGYLLVALVVNDGLAAETAALYLVTYVLTTLGAFGVVTLLSSPYSGADASQLHHYRGLFWRRPYLTAVLTVMMLSLAGIPFTAGFIGKFYIVAVGVEASRWWLVGGVVAGSAIGLYYYLRVMVTLFLPEPGMQRRDATTDWAQRAGGVVVLGLAALVVVLGVYPAPMIDWVRFMVAG.

The next 14 helical transmembrane spans lie at 4–24 (LLALSPLILVCATAIVVMLTI), 32–52 (LTATLTVVGLNLALAAQVVAW), 67–87 (GLAVFGGVLILIATLACATLG), 100–117 (EYYLLLLCAAAGGLALVS), 121–141 (LAALFFGLELLSMPLYGMLAY), 155–175 (YMVLSAAASAFLLFGMALLYS), 198–218 (LMAGMGMMLIGLGFKLSIVPF), 230–250 (PAPAATFLASASKVAVLLVLL), 263–283 (LHSLLAVLAFVTMLVGNLLAL), 291–311 (LLGYSSIAHFGYLLVALVVND), 319–339 (ALYLVTYVLTTLGAFGVVTLL), 366–386 (AVLTVMMLSLAGIPFTAGFIG), 406–426 (VVAGSAIGLYYYLRVMVTLFL), and 447–467 (VVVLGLAALVVVLGVYPAPMI).

Belongs to the complex I subunit 2 family. In terms of assembly, NDH-1 is composed of 14 different subunits. Subunits NuoA, H, J, K, L, M, N constitute the membrane sector of the complex.

It localises to the cell inner membrane. The catalysed reaction is a quinone + NADH + 5 H(+)(in) = a quinol + NAD(+) + 4 H(+)(out). In terms of biological role, NDH-1 shuttles electrons from NADH, via FMN and iron-sulfur (Fe-S) centers, to quinones in the respiratory chain. The immediate electron acceptor for the enzyme in this species is believed to be ubiquinone. Couples the redox reaction to proton translocation (for every two electrons transferred, four hydrogen ions are translocated across the cytoplasmic membrane), and thus conserves the redox energy in a proton gradient. This chain is NADH-quinone oxidoreductase subunit N, found in Chromohalobacter salexigens (strain ATCC BAA-138 / DSM 3043 / CIP 106854 / NCIMB 13768 / 1H11).